We begin with the raw amino-acid sequence, 324 residues long: Elongation factor P--(R)-beta-lysine ligase (324 aa).

75–77 (SPE) lines the substrate pocket. ATP contacts are provided by residues 99–101 (RNK) and N108. Position 117 (Y117) interacts with substrate. 243–244 (EL) lines the ATP pocket. E250 is a substrate binding site. G299 contacts ATP.

It belongs to the class-II aminoacyl-tRNA synthetase family. EpmA subfamily. In terms of assembly, homodimer.

The enzyme catalyses D-beta-lysine + L-lysyl-[protein] + ATP = N(6)-((3R)-3,6-diaminohexanoyl)-L-lysyl-[protein] + AMP + diphosphate + H(+). With EpmB is involved in the beta-lysylation step of the post-translational modification of translation elongation factor P (EF-P). Catalyzes the ATP-dependent activation of (R)-beta-lysine produced by EpmB, forming a lysyl-adenylate, from which the beta-lysyl moiety is then transferred to the epsilon-amino group of a conserved specific lysine residue in EF-P. The chain is Elongation factor P--(R)-beta-lysine ligase from Buchnera aphidicola subsp. Acyrthosiphon pisum (strain 5A).